Reading from the N-terminus, the 120-residue chain is NAD(P)H-quinone oxidoreductase subunit 3, chloroplastic (120 aa).

Transmembrane regions (helical) follow at residues 9-29 (IFWA…WISA), 64-84 (MFAL…PWAM), and 88-108 (VLGI…VVGL).

The protein belongs to the complex I subunit 3 family. In terms of assembly, NDH is composed of at least 16 different subunits, 5 of which are encoded in the nucleus.

The protein localises to the plastid. The protein resides in the chloroplast thylakoid membrane. It carries out the reaction a plastoquinone + NADH + (n+1) H(+)(in) = a plastoquinol + NAD(+) + n H(+)(out). It catalyses the reaction a plastoquinone + NADPH + (n+1) H(+)(in) = a plastoquinol + NADP(+) + n H(+)(out). NDH shuttles electrons from NAD(P)H:plastoquinone, via FMN and iron-sulfur (Fe-S) centers, to quinones in the photosynthetic chain and possibly in a chloroplast respiratory chain. The immediate electron acceptor for the enzyme in this species is believed to be plastoquinone. Couples the redox reaction to proton translocation, and thus conserves the redox energy in a proton gradient. In Oryza nivara (Indian wild rice), this protein is NAD(P)H-quinone oxidoreductase subunit 3, chloroplastic.